The sequence spans 388 residues: Alanine racemase (388 aa).

Catalysis depends on K39, which acts as the Proton acceptor; specific for D-alanine. K39 bears the N6-(pyridoxal phosphate)lysine mark. Residue K129 is modified to N6-carboxylysine. R136 serves as a coordination point for substrate. Catalysis depends on Y265, which acts as the Proton acceptor; specific for L-alanine. A substrate-binding site is contributed by M312.

This sequence belongs to the alanine racemase family. In terms of assembly, homodimer. Requires pyridoxal 5'-phosphate as cofactor.

It carries out the reaction L-alanine = D-alanine. It participates in amino-acid biosynthesis; D-alanine biosynthesis; D-alanine from L-alanine: step 1/1. With respect to regulation, inhibited by acetate and propionate. Irreversibly inhibited by cycloserine. Catalyzes the interconversion of L-alanine and D-alanine. Also weakly active on serine. The sequence is that of Alanine racemase (alr) from Geobacillus stearothermophilus (Bacillus stearothermophilus).